We begin with the raw amino-acid sequence, 267 residues long: Hydroxyethylthiazole kinase 2 (267 aa).

M41 is a binding site for substrate. Residues K116 and T166 each contribute to the ATP site. Position 193 (G193) interacts with substrate.

This sequence belongs to the Thz kinase family. It depends on Mg(2+) as a cofactor.

It catalyses the reaction 5-(2-hydroxyethyl)-4-methylthiazole + ATP = 4-methyl-5-(2-phosphooxyethyl)-thiazole + ADP + H(+). It participates in cofactor biosynthesis; thiamine diphosphate biosynthesis; 4-methyl-5-(2-phosphoethyl)-thiazole from 5-(2-hydroxyethyl)-4-methylthiazole: step 1/1. In terms of biological role, catalyzes the phosphorylation of the hydroxyl group of 4-methyl-5-beta-hydroxyethylthiazole (THZ). This Streptococcus pneumoniae serotype 4 (strain ATCC BAA-334 / TIGR4) protein is Hydroxyethylthiazole kinase 2.